A 351-amino-acid chain; its full sequence is GTPase Obg (351 aa).

Positions 1–159 (MKFLDQAKVY…RWIWLRLKLI (159 aa)) constitute an Obg domain. Residues 160-328 (ADVGLVGLPN…LCGSAWDIVL (169 aa)) enclose the OBG-type G domain. GTP is bound by residues 166–173 (GLPNAGKS), 191–195 (FTTLY), 213–216 (DIPG), 280–283 (NKID), and 309–311 (SGV). Mg(2+)-binding residues include serine 173 and threonine 193.

Belongs to the TRAFAC class OBG-HflX-like GTPase superfamily. OBG GTPase family. As to quaternary structure, monomer. It depends on Mg(2+) as a cofactor.

Its subcellular location is the cytoplasm. Functionally, an essential GTPase which binds GTP, GDP and possibly (p)ppGpp with moderate affinity, with high nucleotide exchange rates and a fairly low GTP hydrolysis rate. Plays a role in control of the cell cycle, stress response, ribosome biogenesis and in those bacteria that undergo differentiation, in morphogenesis control. The polypeptide is GTPase Obg (Maricaulis maris (strain MCS10) (Caulobacter maris)).